A 269-amino-acid polypeptide reads, in one-letter code: MSTGQAPEKSNFSQRCSLLSRYLKEKGSFGNINMGLARKSDLELAGKFDLKGQQNVIKKVETSETRPFKLIQKFSIGEASTSTEDKAIYIDLSEPAKVAPESGNSQLTIFFGGKVMVFNEFPEDKAKEIMEVAKEANHVAVDSKNSQSHMNLDKSNVVIPDLNEPTSSGNNEDQETGQQHQVVERIARRASLHRFFAKRKDRAVARAPYQVNQHGSHLPPKPEMVAPSIKSGQSSQHIATPPKPKAHNHMPMEVDKKEGQSSKNLELKL.

In terms of domain architecture, Tify spans Pro-100–Glu-135. The segment at Pro-160–Gln-181 is disordered. Polar residues predominate over residues Glu-164–Gln-181. Positions Ile-186 to Gln-210 match the Jas motif. Residues Ala-187–Arg-194 carry the Nuclear localization signal motif. The segment at Tyr-209–Leu-269 is disordered. The span at Met-250–Leu-269 shows a compositional bias: basic and acidic residues.

It belongs to the TIFY/JAZ family. Homo- and heterodimer. Interacts with MYC2, AFPH2/NINJA, TIFY10A/JAZ1, TIFY10B/JAZ2, TIFY11A/JAZ5, TIFY5A/JAZ8, TIFY9/JAZ10 and TIFY3B/JAZ12. In terms of assembly, (Microbial infection) Interacts with the pathogenic Pseudomonas syringae HopZ1a protein. (Microbial infection) Acetylated by Pseudomonas syringae HopZ1a. Post-translationally, ubiquitinated. Targeted for degradation by the SCF(COI1) E3 ubiquitin ligase-proteasome pathway during jasmonate signaling.

It localises to the nucleus. Its subcellular location is the cell membrane. Repressor of jasmonate responses. The chain is Protein TIFY 11B from Arabidopsis thaliana (Mouse-ear cress).